A 259-amino-acid chain; its full sequence is tRNA pseudouridine synthase A (259 aa).

Asp51 acts as the Nucleophile in catalysis. Position 109 (Tyr109) interacts with substrate.

This sequence belongs to the tRNA pseudouridine synthase TruA family. Homodimer.

It catalyses the reaction uridine(38/39/40) in tRNA = pseudouridine(38/39/40) in tRNA. Formation of pseudouridine at positions 38, 39 and 40 in the anticodon stem and loop of transfer RNAs. This is tRNA pseudouridine synthase A from Nitrosococcus oceani (strain ATCC 19707 / BCRC 17464 / JCM 30415 / NCIMB 11848 / C-107).